The following is an 851-amino-acid chain: DNA mismatch repair protein MutS (851 aa).

Residue G602–S609 coordinates ATP.

This sequence belongs to the DNA mismatch repair MutS family.

This protein is involved in the repair of mismatches in DNA. It is possible that it carries out the mismatch recognition step. This protein has a weak ATPase activity. In Streptococcus pyogenes serotype M2 (strain MGAS10270), this protein is DNA mismatch repair protein MutS.